The following is a 558-amino-acid chain: DALR anticodon-binding domain-containing protein 3 (558 aa).

The disordered stretch occupies residues 213-240 (KALENSAYRDRETEKGKRRSRGEEIEGE).

This chain is DALR anticodon-binding domain-containing protein 3 (dalrd3), found in Danio rerio (Zebrafish).